A 363-amino-acid chain; its full sequence is MEPRVSVAEAVSSLTIADAFVRACVGPAPPRPALPSRFICSFPDCSASYNKAWKLDAHLCKHTGERPFVCDYEGCGKAFIRDYHLSRHILIHTGEKPFVCADNGCNQKFSTKSNLKKHIERKHENPQKQYVCNFEGCKKAFKKHQQLRTHQCQHTNEPLFRCTHEGCGKHFASPSRLKRHGKVHEGYLCQKGCSFVGKTWTELLKHTREAHKEEVTCTVCQKMFKRKDHLKQHMKTHAPERDVYRCPREGCARTYTTVFNLQSHILSFHEEKRPFVCEHAGCGKTFAMKQSLMRHSVVHDPDKKRMKLKVRPPRERRSLASRLSGYVPPKGKQEPDCSLPNSTESSSSPEATMLAPAALLTVH.

C2H2-type zinc fingers lie at residues 38 to 62, 68 to 92, 98 to 123, 130 to 154, 160 to 184, 187 to 211, 215 to 237, 244 to 269, and 275 to 299; these read FICS…LCKH, FVCD…ILIH, FVCA…ERKH, YVCN…QCQH, FRCT…GKVH, YLCQ…REAH, VTCT…MKTH, YRCP…LSFH, and FVCE…SVVH. Residues 301 to 363 form a disordered region; the sequence is PDKKRMKLKV…LAPAALLTVH (63 aa). The segment covering 338–350 has biased composition (low complexity); that stretch reads SLPNSTESSSSPE.

The protein resides in the nucleus. Involved in ribosomal large subunit biogenesis. Binds the approximately 50 base pairs internal control region (ICR) of 5S ribosomal RNA genes. It is required for their RNA polymerase III-dependent transcription and may also maintain the transcription of other genes. Also binds the transcribed 5S RNA's. In Rattus norvegicus (Rat), this protein is Transcription factor IIIA (Gtf3a).